A 444-amino-acid chain; its full sequence is Divalent metal cation transporter MntH (444 aa).

A run of 11 helical transmembrane segments spans residues 31-51 (GGHW…VSVG), 68-88 (FGYL…VLQG), 115-135 (LALW…EVIG), 146-166 (IPLT…LLLM), 175-195 (AFVM…IALA), 212-232 (VVTN…TVMP), 267-287 (VALM…AAVF), 303-323 (ALLA…VALL), 356-376 (LLTR…YGEA), 381-401 (LLVL…IPLV), and 413-433 (LVAP…IVGL).

Belongs to the NRAMP family.

Its subcellular location is the cell inner membrane. Its function is as follows. H(+)-stimulated, divalent metal cation uptake system. In Xanthomonas campestris pv. campestris (strain ATCC 33913 / DSM 3586 / NCPPB 528 / LMG 568 / P 25), this protein is Divalent metal cation transporter MntH.